Consider the following 1379-residue polypeptide: ABC multidrug transporter MDR2 (1379 aa).

The chain crosses the membrane as a helical span at residues 65 to 85 (IALIVIGTIAGIGAGIPFPLL). One can recognise an ABC transmembrane type-1 1 domain in the interval 69–367 (VIGTIAGIGA…MAPFMHIFAS (299 aa)). Residue N97 is glycosylated (N-linked (GlcNAc...) asparagine). Transmembrane regions (helical) follow at residues 119–139 (VLQV…HTGC), 193–213 (KVGL…VAFL), 215–235 (VATI…MAFG), 301–321 (IQFG…FWQG), and 336–356 (VSVG…FVLS). One can recognise an ABC transporter 1 domain in the interval 403-682 (IELQDVTFNY…DGVYAGMVRL (280 aa)). Residue 438-445 (GTSGSGKS) coordinates ATP. N-linked (GlcNAc...) asparagine glycosylation is found at N552 and N633. The interval 738–758 (YMPEEADSLPTEPENEKEKPK) is disordered. Helical transmembrane passes span 781–801 (LGLI…VIFG), 820–840 (GMLF…AVIV), 901–921 (IGVL…SHVI), and 922–942 (AWRI…SGVL). Residues 781-1068 (LGLITSIMIG…MFALVPDISK (288 aa)) form the ABC transmembrane type-1 2 domain. N989 carries N-linked (GlcNAc...) asparagine glycosylation. The next 2 helical transmembrane spans lie at 1008–1028 (FWLS…YWWG) and 1032–1052 (ILAG…LLFS). The region spanning 1135–1374 (VQFRNVHFRY…CESYRANVIH (240 aa)) is the ABC transporter 2 domain. 1170–1177 (GPSGSGKS) is a binding site for ATP.

This sequence belongs to the ABC transporter superfamily. ABCB family. Multidrug resistance exporter (TC 3.A.1.201) subfamily.

It localises to the cell membrane. In terms of biological role, pleiotropic ABC efflux transporter that may be involved in the modulation susceptibility to a wide range of unrelated cytotoxic compounds. This Trichophyton equinum (strain ATCC MYA-4606 / CBS 127.97) (Horse ringworm fungus) protein is ABC multidrug transporter MDR2.